Reading from the N-terminus, the 384-residue chain is S-adenosylmethionine synthase (384 aa).

Position 15 (His15) interacts with ATP. Asp17 serves as a coordination point for Mg(2+). Glu43 contacts K(+). Residues Glu56 and Gln99 each coordinate L-methionine. Positions 99–109 are flexible loop; that stretch reads QSPDINQGVDR. ATP-binding positions include 164 to 166, 230 to 231, Asp239, 245 to 246, Ala262, and Lys266; these read DAK, RF, and RK. Residue Asp239 coordinates L-methionine. Lys270 is an L-methionine binding site.

Belongs to the AdoMet synthase family. In terms of assembly, homotetramer; dimer of dimers. Requires Mg(2+) as cofactor. K(+) serves as cofactor.

The protein localises to the cytoplasm. It carries out the reaction L-methionine + ATP + H2O = S-adenosyl-L-methionine + phosphate + diphosphate. It participates in amino-acid biosynthesis; S-adenosyl-L-methionine biosynthesis; S-adenosyl-L-methionine from L-methionine: step 1/1. Catalyzes the formation of S-adenosylmethionine (AdoMet) from methionine and ATP. The overall synthetic reaction is composed of two sequential steps, AdoMet formation and the subsequent tripolyphosphate hydrolysis which occurs prior to release of AdoMet from the enzyme. The protein is S-adenosylmethionine synthase of Escherichia fergusonii (strain ATCC 35469 / DSM 13698 / CCUG 18766 / IAM 14443 / JCM 21226 / LMG 7866 / NBRC 102419 / NCTC 12128 / CDC 0568-73).